The sequence spans 55 residues: MAKGIREKIKLESTAGTGHFYTTTKNKRNMPEKMLIKKFDPVARKHVDYKETKLK.

Belongs to the bacterial ribosomal protein bL33 family.

This chain is Large ribosomal subunit protein bL33, found in Bordetella avium (strain 197N).